The chain runs to 150 residues: 3-dehydroquinate dehydratase (150 aa).

The Proton acceptor role is filled by Tyr-26. 3 residues coordinate substrate: Asn-77, His-83, and Asp-90. The active-site Proton donor is the His-103. Substrate contacts are provided by residues 104–105 and Arg-114; that span reads LS.

This sequence belongs to the type-II 3-dehydroquinase family. Homododecamer.

It carries out the reaction 3-dehydroquinate = 3-dehydroshikimate + H2O. It functions in the pathway metabolic intermediate biosynthesis; chorismate biosynthesis; chorismate from D-erythrose 4-phosphate and phosphoenolpyruvate: step 3/7. In terms of biological role, catalyzes a trans-dehydration via an enolate intermediate. The polypeptide is 3-dehydroquinate dehydratase (Erwinia tasmaniensis (strain DSM 17950 / CFBP 7177 / CIP 109463 / NCPPB 4357 / Et1/99)).